Here is a 428-residue protein sequence, read N- to C-terminus: C4-dicarboxylate transport protein 1 (428 aa).

8 helical membrane passes run 5-27 (FYKILYVQVLAAIVIGVLLGHFE), 42-64 (IQLIKMVIGPIIFCTVVSGIAGM), 77-99 (ALLYFEVVSTFALVIGLVAGHIF), 150-167 (ILQILLIALLFGGALSAM), 188-210 (IVHVITRVAPIGAFGAMAFTIGK), 225-247 (TFYLTAIIFVVVVLGIIARLTGF), 314-336 (IFISQALNIELTLTQQLTILAVA), and 351-373 (FITLAATLAVVPTIPVAGMVLIL).

It belongs to the dicarboxylate/amino acid:cation symporter (DAACS) (TC 2.A.23) family.

The protein resides in the cell inner membrane. Its function is as follows. Responsible for the transport of dicarboxylates such as succinate, fumarate, and malate from the periplasm across the membrane. This chain is C4-dicarboxylate transport protein 1 (dctA1), found in Ralstonia nicotianae (strain ATCC BAA-1114 / GMI1000) (Ralstonia solanacearum).